The primary structure comprises 401 residues: Type I restriction enzyme EcoprrI specificity subunit (401 aa).

It belongs to the type-I restriction system S methylase family. The type I restriction/modification system is composed of three polypeptides R, M and S; the restriction enzyme has stoichiometry R(2)M(2)S(1) while the methyltransferase is M(2)S(1).

Its function is as follows. The specificity (S) subunit of a type I restriction enzyme; this subunit dictates DNA sequence specificity. The M and S subunits together form a methyltransferase (MTase) that methylates two adenine residues of the sequence 5'-CCAN(7)ATGC-3'. In the presence of the R subunit the complex can also act as an endonuclease, binding to the same target sequence but cutting the DNA some distance from this site. Whether the DNA is cut or modified depends on the methylation state of the target sequence. When the target site is unmodified, the DNA is cut. When the target site is hemimethylated, the complex acts as a maintenance MTase modifying the DNA so that both strands become methylated. After locating a non-methylated recognition site, the enzyme complex serves as a molecular motor that translocates DNA in an ATP-dependent manner until a collision occurs that triggers cleavage. The protein is Type I restriction enzyme EcoprrI specificity subunit (prrB) of Escherichia coli.